Reading from the N-terminus, the 291-residue chain is uncharacterized protein (291 aa).

NAD(+)-binding positions include 5-19 (AFIG…MAGH) and Thr-97. Lys-172 is a catalytic residue. Lys-240 serves as a coordination point for NAD(+).

It belongs to the HIBADH-related family.

This is an uncharacterized protein from Shewanella frigidimarina (strain NCIMB 400).